A 368-amino-acid chain; its full sequence is Ubiquitin domain-containing protein UBFD1 (368 aa).

The tract at residues 106–139 (SCDARGNLQPAPAQPPGDPAAQASVSNGEDAGGG) is disordered. The Ubiquitin-like domain occupies 143–218 (ELVDLKIIWN…IMVVGSTIND (76 aa)). Residues 231–263 (QDAKAEENKKEPLCRQKQHRKVLDKGKPEDVMP) form a disordered region. 2 stretches are compositionally biased toward basic and acidic residues: residues 233 to 244 (AKAEENKKEPLC) and 251 to 260 (KVLDKGKPED).

This chain is Ubiquitin domain-containing protein UBFD1 (Ubfd1), found in Mus musculus (Mouse).